A 126-amino-acid polypeptide reads, in one-letter code: Large-conductance mechanosensitive channel (126 aa).

The next 2 helical transmembrane spans lie at valine 17–isoleucine 37 and glycine 70–isoleucine 90.

This sequence belongs to the MscL family. Homopentamer.

Its subcellular location is the cell inner membrane. Its function is as follows. Channel that opens in response to stretch forces in the membrane lipid bilayer. May participate in the regulation of osmotic pressure changes within the cell. The sequence is that of Large-conductance mechanosensitive channel from Flavobacterium johnsoniae (strain ATCC 17061 / DSM 2064 / JCM 8514 / BCRC 14874 / CCUG 350202 / NBRC 14942 / NCIMB 11054 / UW101) (Cytophaga johnsonae).